The chain runs to 360 residues: Protein NDRG2 (360 aa).

The segment at 325–360 (RTASLSSEGNRSRSRTLSQSSESGGGPPAPLAEVTC) is disordered.

It belongs to the NDRG family.

It is found in the cytoplasm. Contributes to the regulation of the Wnt signaling pathway. Down-regulates CTNNB1-mediated transcriptional activation of target genes. May be involved in neuron differentiation. This chain is Protein NDRG2, found in Xenopus tropicalis (Western clawed frog).